We begin with the raw amino-acid sequence, 198 residues long: Nucleoid occlusion factor SlmA (198 aa).

An HTH tetR-type domain is found at 10–70 (NRREEILQSL…SLIEFIEDSL (61 aa)). Residues 33–52 (TTAKLAASVGVSEAALYRHF) constitute a DNA-binding region (H-T-H motif). Positions 117–144 (EQDRLQGRINQLFERIEAQLRQVLREKR) form a coiled coil.

It belongs to the nucleoid occlusion factor SlmA family. As to quaternary structure, homodimer. Interacts with FtsZ.

It localises to the cytoplasm. Its subcellular location is the nucleoid. Functionally, required for nucleoid occlusion (NO) phenomenon, which prevents Z-ring formation and cell division over the nucleoid. Acts as a DNA-associated cell division inhibitor that binds simultaneously chromosomal DNA and FtsZ, and disrupts the assembly of FtsZ polymers. SlmA-DNA-binding sequences (SBS) are dispersed on non-Ter regions of the chromosome, preventing FtsZ polymerization at these regions. This Escherichia coli (strain 55989 / EAEC) protein is Nucleoid occlusion factor SlmA.